We begin with the raw amino-acid sequence, 145 residues long: Ribonuclease HI (145 aa).

The region spanning 1–142 is the RNase H type-1 domain; it reads MNQTVYLYTD…ADDLANRGAA (142 aa). Mg(2+) is bound by residues Asp-10, Glu-48, Asp-70, and Asp-134.

This sequence belongs to the RNase H family. In terms of assembly, monomer. Mg(2+) is required as a cofactor.

It is found in the cytoplasm. The catalysed reaction is Endonucleolytic cleavage to 5'-phosphomonoester.. Endonuclease that specifically degrades the RNA of RNA-DNA hybrids. This is Ribonuclease HI from Neisseria meningitidis serogroup B (strain ATCC BAA-335 / MC58).